The chain runs to 315 residues: tRNA dimethylallyltransferase (315 aa).

Position 13–20 (13–20 (GPTASGKT)) interacts with ATP. Residue 15–20 (TASGKT) coordinates substrate. Interaction with substrate tRNA stretches follow at residues 38-41 (DSAL), 162-166 (QRLSR), 243-248 (RCVGYR), and 276-283 (KRQITWLR).

The protein belongs to the IPP transferase family. Monomer. Mg(2+) is required as a cofactor.

The enzyme catalyses adenosine(37) in tRNA + dimethylallyl diphosphate = N(6)-dimethylallyladenosine(37) in tRNA + diphosphate. Catalyzes the transfer of a dimethylallyl group onto the adenine at position 37 in tRNAs that read codons beginning with uridine, leading to the formation of N6-(dimethylallyl)adenosine (i(6)A). The protein is tRNA dimethylallyltransferase of Vibrio vulnificus (strain CMCP6).